A 212-amino-acid polypeptide reads, in one-letter code: ATP phosphoribosyltransferase (212 aa).

This sequence belongs to the ATP phosphoribosyltransferase family. Short subfamily. As to quaternary structure, heteromultimer composed of HisG and HisZ subunits.

It is found in the cytoplasm. It catalyses the reaction 1-(5-phospho-beta-D-ribosyl)-ATP + diphosphate = 5-phospho-alpha-D-ribose 1-diphosphate + ATP. The protein operates within amino-acid biosynthesis; L-histidine biosynthesis; L-histidine from 5-phospho-alpha-D-ribose 1-diphosphate: step 1/9. Functionally, catalyzes the condensation of ATP and 5-phosphoribose 1-diphosphate to form N'-(5'-phosphoribosyl)-ATP (PR-ATP). Has a crucial role in the pathway because the rate of histidine biosynthesis seems to be controlled primarily by regulation of HisG enzymatic activity. This chain is ATP phosphoribosyltransferase, found in Prochlorococcus marinus (strain MIT 9301).